The following is a 307-amino-acid chain: Glutaminase (307 aa).

Substrate is bound by residues S66, N116, E160, N167, Y191, Y243, and V261.

The protein belongs to the glutaminase family. In terms of assembly, homotetramer.

It carries out the reaction L-glutamine + H2O = L-glutamate + NH4(+). The sequence is that of Glutaminase from Pseudoalteromonas translucida (strain TAC 125).